The primary structure comprises 351 residues: Prostaglandin reductase 2 (351 aa).

99 to 100 (FY) contributes to the substrate binding site. NADP(+)-binding positions include 165-168 (GACG), K192, Y208, N231, 253-259 (CGQISQY), 287-289 (FLV), and N337. 288 to 290 (LVL) contributes to the substrate binding site.

Belongs to the NADP-dependent oxidoreductase L4BD family. Monomer.

It localises to the cytoplasm. It carries out the reaction 13,14-dihydro-15-oxo-prostaglandin E2 + NAD(+) = 15-oxoprostaglandin E2 + NADH + H(+). It catalyses the reaction 13,14-dihydro-15-oxo-prostaglandin E2 + NADP(+) = 15-oxoprostaglandin E2 + NADPH + H(+). The enzyme catalyses 13,14-dihydro-15-oxo-PGF2alpha + NADP(+) = 15-oxoprostaglandin F2alpha + NADPH + H(+). The catalysed reaction is 13,14-dihydro-15-oxo-prostaglandin E1 + NADP(+) = 15-oxoprostaglandin E1 + NADPH + H(+). It carries out the reaction 13,14-dihydro-15-oxo-prostaglandin F1alpha + NADP(+) = 15-oxoprostaglandin F1alpha + NADPH + H(+). Functionally, functions as 15-oxo-prostaglandin 13-reductase and acts on 15-keto-PGE1, 15-keto-PGE2, 15-keto-PGE1-alpha and 15-keto-PGE2-alpha with highest activity towards 15-keto-PGE2. Overexpression represses transcriptional activity of PPARG and inhibits adipocyte differentiation. The chain is Prostaglandin reductase 2 (PTGR2) from Bos taurus (Bovine).